The following is a 189-amino-acid chain: Mediator of RNA polymerase II transcription subunit 21 (189 aa).

The tract at residues 50 to 102 is disordered; the sequence is KIPKNSTAPPVPAGAPVPSQSSPPPPQTQRGASEAAADPNLPPAPDSPRTFAS. Residues 58–76 are compositionally biased toward pro residues; it reads PPVPAGAPVPSQSSPPPPQ. A coiled-coil region spans residues 127 to 170; the sequence is GIDSSEAEQEKRIRELEAELRGVEEEREAKIRELRTLGRTLERV.

Belongs to the Mediator complex subunit 21 family. As to quaternary structure, component of the Mediator complex.

Its subcellular location is the nucleus. In terms of biological role, component of the Mediator complex, a coactivator involved in the regulated transcription of nearly all RNA polymerase II-dependent genes. Mediator functions as a bridge to convey information from gene-specific regulatory proteins to the basal RNA polymerase II transcription machinery. Mediator is recruited to promoters by direct interactions with regulatory proteins and serves as a scaffold for the assembly of a functional preinitiation complex with RNA polymerase II and the general transcription factors. This chain is Mediator of RNA polymerase II transcription subunit 21 (srb7), found in Aspergillus clavatus (strain ATCC 1007 / CBS 513.65 / DSM 816 / NCTC 3887 / NRRL 1 / QM 1276 / 107).